The following is a 430-amino-acid chain: Potassium channel subfamily K member 12 (430 aa).

Topologically, residues 1–38 are cytoplasmic; the sequence is MSSRSPRPPPRRCRRRLPRPSCCCCCCRRSHLNEDTGR. The interval 11 to 16 is ER retention/retrieval signal; it reads RRCRRR. The chain crosses the membrane as a helical span at residues 39 to 59; it reads FVLLAALIGLYLVAGATVFSA. The N-linked (GlcNAc...) asparagine glycan is linked to Asn78. The pore-forming intramembrane region spans 114-134; the sequence is WDFPGAFYFVGTVVSTIGFGM. K(+) contacts are provided by Thr129, Ile130, and Gly131. Positions 129–134 are selectivity filter 1; the sequence is TIGFGM. Residues 145-165 form a helical membrane-spanning segment; that stretch reads FLIAYGLFGCAGTILFFNLFL. At 166–212 the chain is on the cytoplasmic side; sequence ERIISLLAFIMRACRERQLRRSGLLPATFRRGSALSEADSLAGWKPS. A helical transmembrane segment spans residues 213–233; it reads VYHVLLILGLFAVLLACCASA. An intramembrane region (pore-forming) is located at residues 243 to 263; that stretch reads YVDSLYFCFVTFSTIGFGDLV. Residues Thr256, Ile257, Gly258, and Phe259 each coordinate K(+). The segment at 256 to 261 is selectivity filter 2; sequence TIGFGD. The helical transmembrane segment at 282 to 302 threads the bilayer; it reads LFILLGVCCIYSLFNVISILI. Topologically, residues 303-430 are cytoplasmic; that stretch reads KQVLNWMLRK…NRLAETSASR (128 aa).

The protein belongs to the two pore domain potassium channel (TC 1.A.1.8) family. Homodimer. Heterodimer with KCNK13. Highly expressed in most brain regions. Also expressed in other tissues such as lung, kidney, liver, stomach and spleen.

The protein localises to the cell membrane. Its subcellular location is the endoplasmic reticulum membrane. It catalyses the reaction K(+)(in) = K(+)(out). K(+) channel subunit that may homo- and heterodimerize to form functional channels with distinct regulatory and gating properties. Can heterodimerize with KCNK13 subunit to conduct K(+) outward rectifying currents at the plasma membrane. The homodimers are mainly retained in the endoplasmic reticulum compartment and may be targeted to the cell surface upon phosphorylation or other activation signals yet to be elucidated. This chain is Potassium channel subfamily K member 12 (Kcnk12), found in Rattus norvegicus (Rat).